The chain runs to 147 residues: Large ribosomal subunit protein uL15 (147 aa).

Residues Met-1–Met-55 are disordered. Positions Val-23–Met-35 are enriched in gly residues.

The protein belongs to the universal ribosomal protein uL15 family. As to quaternary structure, part of the 50S ribosomal subunit.

Its function is as follows. Binds to the 23S rRNA. The protein is Large ribosomal subunit protein uL15 of Microcystis aeruginosa (strain NIES-843 / IAM M-2473).